A 310-amino-acid chain; its full sequence is Putative S-adenosyl-L-methionine-dependent methyltransferase ML2640 (310 aa).

Residues aspartate 132 and aspartate 161 to leucine 162 each bind S-adenosyl-L-methionine.

Belongs to the UPF0677 family.

Exhibits S-adenosyl-L-methionine-dependent methyltransferase activity. The protein is Putative S-adenosyl-L-methionine-dependent methyltransferase ML2640 of Mycobacterium leprae (strain TN).